A 145-amino-acid polypeptide reads, in one-letter code: UPF0102 protein BAV3162 (145 aa).

It belongs to the UPF0102 family.

The sequence is that of UPF0102 protein BAV3162 from Bordetella avium (strain 197N).